Here is a 306-residue protein sequence, read N- to C-terminus: GTP cyclohydrolase FolE2 (306 aa).

This sequence belongs to the GTP cyclohydrolase IV family.

The enzyme catalyses GTP + H2O = 7,8-dihydroneopterin 3'-triphosphate + formate + H(+). It participates in cofactor biosynthesis; 7,8-dihydroneopterin triphosphate biosynthesis; 7,8-dihydroneopterin triphosphate from GTP: step 1/1. Converts GTP to 7,8-dihydroneopterin triphosphate. In Xanthomonas oryzae pv. oryzae (strain MAFF 311018), this protein is GTP cyclohydrolase FolE2.